The primary structure comprises 5112 residues: Malformin synthetase mlfA (5112 aa).

Positions 225 to 616 (ERHAANRPHS…CGRADTQVKL (392 aa)) are adenylation 1. The region spanning 757-830 (SRLEQEIQLA…EAASLAEVQE (74 aa)) is the Carrier 1 domain. O-(pantetheine 4'-phosphoryl)serine is present on Ser-791. The interval 868 to 1299 (EDVFPCTTMQ…ALDSLTLLQA (432 aa)) is condensation 1. Residues 1327 to 1716 (DRRVTRQPDT…GRKDTQVKLR (390 aa)) are adenylation 2. One can recognise a Carrier 2 domain in the interval 1854–1931 (TAASELERTL…QLAAELGESP (78 aa)). Residue Ser-1891 is modified to O-(pantetheine 4'-phosphoryl)serine. Disordered regions lie at residues 1926 to 1961 (ELGE…DGVD) and 1994 to 2034 (GGSS…VPEP). Composition is skewed to low complexity over residues 1930–1941 (SPRSSTSSASSS) and 1994–2012 (GGSS…SSSS). Residues 2064 to 2479 (EDIYPATALQ…AVSYSDKQTL (416 aa)) form a condensation 2 region. Residues 2502–2894 (IRTPHAPAVC…IGRRDGQVKL (393 aa)) are adenylation 3. Residues 3030–3106 (RPTTAKECEM…QLLFHLRNAK (77 aa)) enclose the Carrier 3 domain. The residue at position 3067 (Ser-3067) is an O-(pantetheine 4'-phosphoryl)serine. Condensation stretches follow at residues 3122–3586 (WVDL…TYEQ) and 3607–4044 (NIYP…EQLV). The interval 4069 to 4459 (HSSRQAVCAW…VGRKDNQIKF (391 aa)) is adenylation 4. The region spanning 4593–4669 (MPSTEAECIM…DLARHNSLVQ (77 aa)) is the Carrier 4 domain. Ser-4630 is modified (O-(pantetheine 4'-phosphoryl)serine). A condensation 5 region spans residues 4724–5106 (IVVDIPGRIS…VEKVVALLRD (383 aa)).

This sequence belongs to the NRP synthetase family.

The protein operates within secondary metabolite biosynthesis. Functionally, nonribosomal peptide synthetase; part of the gene cluster that mediates the biosynthesis of malformins, cyclic pentapeptides with a disulfide bond between 2 consecutive cysteins, that show potential anti-tumor as well as antimalarial and antitrypanosomal properties. The nonribosomal peptide synthetase mlfA is responsible of the formation of the cyclic pentapeptide. MlfA probably acts iteratively on one amino acid and possesses multiple amino acid specificities since it is involved in the biosynthesis of multiple malformins, including malformin C and malformin A2. Malformin C corresponds to a cyclo[D-Cys-D-Cys-Val-D-Leu-Val] pentapeptide whereas malformin A2 corresponds to a cyclo[D-Cys-D-Cys-Val-D-Leu-Ile] pentapeptide. The malformin biosynthesis clusters in malformin-producing fungi also contain enzymes involved in the formation of the disulfide bond between the two consecutive cysteins within malformins, in addition to additional tailoring enzymes such as methyltransferases or oxidoreductases. They are also composed of up to 4 major facilitator superfamily transporters, and transcription factors probably involved in the regulation of the expression of those clusters. The polypeptide is Malformin synthetase mlfA (Aspergillus brasiliensis (strain CBS 101740 / IMI 381727 / IBT 21946)).